The sequence spans 534 residues: Cytokinin dehydrogenase 5 (534 aa).

The first 20 residues, 1–20 (MAWCLVFMVFLIYCLISTVG), serve as a signal peptide directing secretion. In terms of domain architecture, FAD-binding PCMH-type spans 59–243 (TSAEPLAVFH…TRARIALEPA (185 aa)). Residues Ala93, Gly95, and Gly97 each contribute to the FAD site. His98 carries the post-translational modification Pros-8alpha-FAD histidine. Positions 99 and 103 each coordinate FAD. Asn152 carries an N-linked (GlcNAc...) asparagine glycan. Residues Asp167, Ser172, Ser178, Ile182, and Ile233 each coordinate FAD. An N-linked (GlcNAc...) asparagine glycan is attached at Asn256. FAD-binding residues include Tyr484 and Gln522.

It belongs to the oxygen-dependent FAD-linked oxidoreductase family. As to quaternary structure, monomer. FAD serves as cofactor. Expressed in inflorescence meristems.

The protein resides in the secreted. It localises to the extracellular space. The enzyme catalyses N(6)-dimethylallyladenine + A + H2O = 3-methyl-2-butenal + adenine + AH2. Its function is as follows. Catalyzes the oxidation of cytokinins, a family of N(6)-substituted adenine derivatives that are plant hormones, where the substituent is an isopentenyl group. The polypeptide is Cytokinin dehydrogenase 5 (CKX5) (Oryza sativa subsp. japonica (Rice)).